Consider the following 354-residue polypeptide: Membrane progestin receptor beta (354 aa).

The Cytoplasmic segment spans residues 1 to 76 (MTTAILERLS…FSLFQKHNEV (76 aa)). Residues 77-97 (VNVWTHLLAALAVLLRFWAFV) form a helical membrane-spanning segment. At 98–111 (EAGALQWASPHTLP) the chain is on the extracellular side. The chain crosses the membrane as a helical span at residues 112–132 (LLLFILSSITYLTCSLLAHLL). The Cytoplasmic portion of the chain corresponds to 133–173 (QSKSELSHYTFYFVDYVGVSVYQYGSALAHFFYSSDQAWYE). The helical transmembrane segment at 174-194 (LFWIFFLPAAAFCGWLSCAGC) threads the bilayer. Topologically, residues 195 to 213 (CYAKYRYRRPYPVMRKICQ) are extracellular. A helical transmembrane segment spans residues 214–234 (VVPAGLAFVLDISPVAHRVAL). The Cytoplasmic segment spans residues 235–243 (CHLAGCQEQ). A helical transmembrane segment spans residues 244 to 264 (AAWYHTLQILFFLVSAYFFSC). The Extracellular portion of the chain corresponds to 265–283 (PVPEKYFPGSCDIVGHGHQ). A helical transmembrane segment spans residues 284–304 (IFHAFLSVCTLSQLEAILLDY). The Cytoplasmic segment spans residues 305-315 (QGRHEIFLQRH). The helical transmembrane segment at 316–336 (GPLSVYSACLSFFVLAACSAA) threads the bilayer. Topologically, residues 337–354 (TATLLRHKVKDRLIKKDS) are extracellular.

The protein belongs to the ADIPOR family. As to expression, expressed in brain and testis.

The protein resides in the cell membrane. Functionally, plasma membrane progesterone (P4) receptor coupled to G proteins. Seems to act through a G(i) mediated pathway. May be involved in oocyte maturation. Also binds dehydroepiandrosterone (DHEA), pregnanolone, pregnenolone and allopregnanolone. The polypeptide is Membrane progestin receptor beta (Mus musculus (Mouse)).